Reading from the N-terminus, the 1011-residue chain is Vacuolar membrane protease (1011 aa).

Residues 1-14 (MKLTKAVFRFRRTN) are Cytoplasmic-facing. The helical transmembrane segment at 15-35 (LSTLLVITYLVITTLYVWDHF) threads the bilayer. Residues 36–352 (RYHFTLPSDY…WFVVWSARSL (317 aa)) are Vacuolar-facing. His149, Asp161, Glu194, Glu219, and His293 together coordinate Zn(2+). A helical membrane pass occupies residues 353 to 373 (FYWNCIILALFPSILAILFLV). Residues 374 to 390 (AYDMQLLKFNFWDAMLR) are Cytoplasmic-facing. Residues 391–411 (LPVSVCLAYFCVKLFQVLVGQ) traverse the membrane as a helical segment. Topologically, residues 412–420 (LNPYVFSRD) are vacuolar. The chain crosses the membrane as a helical span at residues 421–441 (YVSPILAEASMFIFMNYVILS). Topologically, residues 442-451 (SWERLRPLRD) are cytoplasmic. The helical transmembrane segment at 452 to 472 (FKTVALVEVSMVLWIYLISVT) threads the bilayer. Topologically, residues 473–487 (RWLRDSDYTATGLYP) are vacuolar. Residues 488–508 (FTIGYTFVSIGAIIGVFCATF) traverse the membrane as a helical segment. The Cytoplasmic segment spans residues 509–647 (KAKLNPEDDS…SILNYDWSIQ (139 aa)). The segment at 534 to 585 (MQHQYQQHSQKHSNQHSPHHSTHHSAQHSVHHSPRQSIHQVPSSEQRQRDAS) is disordered. The span at 542–567 (SQKHSNQHSPHHSTHHSAQHSVHHSP) shows a compositional bias: basic residues. The span at 568 to 578 (RQSIHQVPSSE) shows a compositional bias: polar residues. Residues 648 to 668 (FMVVTPWVTYFTWICLDLIMG) traverse the membrane as a helical segment. At 669–681 (AMNQTIQESAKGT) the chain is on the vacuolar side. Asn671 carries an N-linked (GlcNAc...) asparagine glycan. Residues 682-702 (TFVTHMALIGSLLLSLPMLPF) form a helical membrane-spanning segment. The Cytoplasmic segment spans residues 703–708 (TYKLHS). A helical transmembrane segment spans residues 709 to 729 (FAGMLFLLLAVTTAVWTIVAP). The Vacuolar portion of the chain corresponds to 730 to 1011 (PFTESSPLKL…MVSVTKYVEL (282 aa)). N-linked (GlcNAc...) asparagine glycans are attached at residues Asn751, Asn825, and Asn854.

It belongs to the peptidase M28 family. It depends on Zn(2+) as a cofactor.

It is found in the vacuole membrane. Its function is as follows. May be involved in vacuolar sorting and osmoregulation. This is Vacuolar membrane protease from Eremothecium gossypii (strain ATCC 10895 / CBS 109.51 / FGSC 9923 / NRRL Y-1056) (Yeast).